The chain runs to 230 residues: V-type proton ATPase subunit E (230 aa).

Belongs to the V-ATPase E subunit family. As to quaternary structure, V-ATPase is a heteromultimeric enzyme composed of a peripheral catalytic V1 complex (components A to H) attached to an integral membrane V0 proton pore complex (components: a, c, c', c'' and d).

Its function is as follows. Subunit of the peripheral V1 complex of vacuolar ATPase essential for assembly or catalytic function. V-ATPase is responsible for acidifying a variety of intracellular compartments in eukaryotic cells. The chain is V-type proton ATPase subunit E (VATE) from Citrus limon (Lemon).